Here is a 1098-residue protein sequence, read N- to C-terminus: Bifunctional helicase and thymine dioxygenase JBP2 (1098 aa).

Positions 1 to 540 (MLNGLTRVST…PPLFVPTRLA (540 aa)) are thymine dioxygenase. H415, D417, and H465 together coordinate Fe cation. A 2-oxoglutarate-binding site is contributed by R479. The segment at 541 to 1098 (SHLAPVQLAA…RYQESVRESE (558 aa)) is DNA Helicase. The region spanning 555–730 (VERTEKQSGC…YRLVGWVNKG (176 aa)) is the Helicase ATP-binding domain. 568 to 575 (MTMGLGKT) serves as a coordination point for ATP. The DEAH box signature appears at 681-684 (DEGH). Positions 897–1057 (VLVDIVLRVQ…ALPDELEDCA (161 aa)) constitute a Helicase C-terminal domain.

It in the C-terminal section; belongs to the SNF2/RAD54 helicase family. This sequence in the N-terminal section; belongs to the TET family. JBP2 subfamily. Requires Fe(2+) as cofactor.

It localises to the nucleus. It carries out the reaction ATP + H2O = ADP + phosphate + H(+). It catalyses the reaction thymine + 2-oxoglutarate + O2 = 5-hydroxymethyluracil + succinate + CO2. Dioxygenase that catalyzes the first step of DNA base J (beta-d-glucosyl-HOMedU) biosynthesis by converting thymine to 5-hydroxymethyluracil (HOMedU). DNA base J is a hypermodified thymidine residue found in the genome of kinetoplastid parasites, which is localized primarily to repetitive DNA, namely the telomeres, and is implicated in the regulation of antigenic variation. Probably also acts as a DNA helicase. Recognizes and binds specific regions of the genome, hydrolyzes ATP and allows the DNA base J de novo synthesis. Involved in initial synthesis of DNA base J, JBP1 being able to act via the basal level of DNA base J and propagate further synthesis. In contrast to JBP1, it does not specifically bind DNA base J, however it binds chromatin. The sequence is that of Bifunctional helicase and thymine dioxygenase JBP2 (JBP2) from Leishmania infantum.